The following is a 411-amino-acid chain: Phospholipase ABHD3 (411 aa).

The helical; Signal-anchor for type II membrane protein transmembrane segment at 25–45 threads the bilayer; it reads VGFFGSGVGLSLILGFSVAYA. The region spanning 140 to 233 is the AB hydrolase-1 domain; that stretch reads PTILLLPGLT…MLLLNYLGKI (94 aa). Catalysis depends on charge relay system residues S220, D346, and H375.

The protein belongs to the AB hydrolase superfamily. AB hydrolase 4 family. Widely expressed with higher expression in liver.

The protein localises to the membrane. The catalysed reaction is a 1,2-diacyl-sn-glycero-3-phosphocholine + H2O = a 1-acyl-sn-glycero-3-phosphocholine + a fatty acid + H(+). It catalyses the reaction a 1,2-diacyl-sn-glycero-3-phosphocholine + H2O = a 2-acyl-sn-glycero-3-phosphocholine + a fatty acid + H(+). The enzyme catalyses 1-tetradecanoyl-2-(9Z,12Z-octadecadienoyl)-sn-glycero-3-phosphocholine + H2O = 2-(9Z,12Z-octadecadienoyl)-sn-glycero-3-phosphocholine + tetradecanoate + H(+). It carries out the reaction 1-tetradecanoyl-2-(9Z,12Z-octadecadienoyl)-sn-glycero-3-phosphocholine + H2O = 1-tetradecanoyl-sn-glycero-3-phosphocholine + (9Z,12Z)-octadecadienoate + H(+). The catalysed reaction is 1-tetradecanoyl-2-(5Z,8Z,11Z,14Z-eicosatetraenoyl)-sn-glycero-3-phosphocholine + H2O = 2-(5Z,8Z,11Z,14Z)-eicosatetraenoyl-sn-glycero-3-phosphocholine + tetradecanoate + H(+). It catalyses the reaction 1-tetradecanoyl-2-(4Z,7Z,10Z,13Z,16Z,19Z-docosahexaenoyl)-sn-glycero-3-phosphocholine + H2O = 2-(4Z,7Z,10Z,13Z,16Z,19Z-docosahexaenoyl)-sn-glycero-3-phosphocholine + tetradecanoate + H(+). The enzyme catalyses 1,2-ditetradecanoyl-sn-glycero-3-phosphocholine + H2O = 2-tetradecanoyl-sn-glycero-3-phosphocholine + tetradecanoate + H(+). It carries out the reaction 1-octadecanoyl-2-acetyl-sn-glycero-3-phosphocholine + H2O = 1-octadecanoyl-sn-glycero-3-phosphocholine + acetate + H(+). The catalysed reaction is 1,2-ditetradecanoyl-sn-glycero-3-phosphocholine + H2O = 1-tetradecanoyl-sn-glycero-3-phosphocholine + tetradecanoate + H(+). It catalyses the reaction 1-octadecanoyl-2-pentanoyl-sn-glycero-3-phosphocholine + H2O = pentanoate + 1-octadecanoyl-sn-glycero-3-phosphocholine + H(+). The enzyme catalyses 1-octadecanoyl-2-hexanoyl-sn-glycero-3-phosphocholine + H2O = hexanoate + 1-octadecanoyl-sn-glycero-3-phosphocholine + H(+). It carries out the reaction 1-octadecanoyl-2-octanoyl-sn-glycero-3-phosphocholine + H2O = 1-octadecanoyl-sn-glycero-3-phosphocholine + octanoate + H(+). The catalysed reaction is 1-octadecanoyl-2-nonanoyl-sn-glycero-3-phosphocholine + H2O = nonanoate + 1-octadecanoyl-sn-glycero-3-phosphocholine + H(+). It catalyses the reaction 1-O-hexadecyl-2-nonadioyl-sn-glycero-3-phosphocholine + H2O = nonanedioate + 1-O-hexadecyl-sn-glycero-3-phosphocholine + H(+). The enzyme catalyses 1-hexadecanoyl-2-nonadioyl-sn-glycero-3-phosphocholine + H2O = nonanedioate + 1-hexadecanoyl-sn-glycero-3-phosphocholine + H(+). It carries out the reaction 1-hexadecanoyl-2-(9-oxononanoyl)-sn-glycero-3-phosphocholine + H2O = 9-oxononanoate + 1-hexadecanoyl-sn-glycero-3-phosphocholine + H(+). The catalysed reaction is 1-hexadecanoyl-2-(5-oxopentanoyl)-sn-glycero-3-phosphocholine + H2O = 5-oxopentanoate + 1-hexadecanoyl-sn-glycero-3-phosphocholine + H(+). It catalyses the reaction 1-hexadecanoyl-2-glutaroyl-sn-glycero-3-phosphocholine + H2O = glutarate + 1-hexadecanoyl-sn-glycero-3-phosphocholine + H(+). The enzyme catalyses 1-O-hexadecyl-2-acetyl-sn-glycero-3-phosphocholine + H2O = 1-O-hexadecyl-sn-glycero-3-phosphocholine + acetate + H(+). In terms of biological role, phospholipase that may play a role in phospholipids remodeling. May selectively cleave myristate (C14)-containing phosphatidylcholines through its predominant phospholipase 1 activity, cleaving preferentially acyl groups in sn1 position. In parallel, may have a minor phospholipase 2 activity acting on acyl groups in position sn2. In addition to (C14)-containing phosphatidylcholines, may also act on other medium-chain-containing and oxidatively truncated phospholipids. This chain is Phospholipase ABHD3, found in Mus musculus (Mouse).